A 327-amino-acid polypeptide reads, in one-letter code: MPADQRPLAIALMGPTASGKTALALEAAERWNGEIVSVDSALVYRGLEIGAAKPDAAMRAAVPHHLLDLRDPWQVYSAAEFAGDARQAIAQIVARGKLPILAGGTGLYFRALLEGLSHLPEADRAARASIAAEAEQIGWAGLHSELARVDPVAAARIHATDPQRIQRALEVYRISGRPISYWQALPPGLRLPVRVLKVVLAPRERAVLHGRIERRLDAMLAQGFLAEVEQVRALPQMRAVAVPLDLPAVRAVGYRQAWEYLDGAGSLAEFRDKAIQATRQLAKRQLTWLRGELDARWFDPERDRHQLERALVGFLGDRSAVRQASGV.

14 to 21 (GPTASGKT) provides a ligand contact to ATP. 16 to 21 (TASGKT) provides a ligand contact to substrate. Interaction with substrate tRNA regions lie at residues 39 to 42 (DSAL) and 163 to 167 (QRIQR).

The protein belongs to the IPP transferase family. As to quaternary structure, monomer. Mg(2+) serves as cofactor.

It catalyses the reaction adenosine(37) in tRNA + dimethylallyl diphosphate = N(6)-dimethylallyladenosine(37) in tRNA + diphosphate. Catalyzes the transfer of a dimethylallyl group onto the adenine at position 37 in tRNAs that read codons beginning with uridine, leading to the formation of N6-(dimethylallyl)adenosine (i(6)A). The sequence is that of tRNA dimethylallyltransferase from Xanthomonas oryzae pv. oryzae (strain PXO99A).